A 450-amino-acid polypeptide reads, in one-letter code: Phosphoglucosamine mutase (450 aa).

Residue Ser102 is the Phosphoserine intermediate of the active site. Mg(2+)-binding residues include Ser102, Asp242, Asp244, and Asp246. Ser102 is subject to Phosphoserine.

It belongs to the phosphohexose mutase family. Mg(2+) is required as a cofactor. Post-translationally, activated by phosphorylation.

It catalyses the reaction alpha-D-glucosamine 1-phosphate = D-glucosamine 6-phosphate. Functionally, catalyzes the conversion of glucosamine-6-phosphate to glucosamine-1-phosphate. The protein is Phosphoglucosamine mutase of Staphylococcus haemolyticus (strain JCSC1435).